The sequence spans 680 residues: Glutamine-dependent NAD(+) synthetase (680 aa).

The region spanning 12-276 (VRVAACTHHA…EHRSVADVDT (265 aa)) is the CN hydrolase domain. The active-site Proton acceptor; for glutaminase activity is the Glu-52. The For glutaminase activity role is filled by Lys-121. L-glutamine is bound at residue Tyr-127. Catalysis depends on Cys-176, which acts as the Nucleophile; for glutaminase activity. 2 residues coordinate L-glutamine: Ser-203 and Arg-209. Residue 366 to 373 (GVSGGLDS) coordinates ATP. Asn-456 lines the deamido-NAD(+) pocket. An ATP-binding site is contributed by Thr-480. Residues Glu-485, 490 to 493 (WSTY), and Lys-636 contribute to the deamido-NAD(+) site.

In the C-terminal section; belongs to the NAD synthetase family.

The catalysed reaction is deamido-NAD(+) + L-glutamine + ATP + H2O = L-glutamate + AMP + diphosphate + NAD(+) + H(+). Its pathway is cofactor biosynthesis; NAD(+) biosynthesis; NAD(+) from deamido-NAD(+) (L-Gln route): step 1/1. Catalyzes the ATP-dependent amidation of deamido-NAD to form NAD. Uses L-glutamine as a nitrogen source. This is Glutamine-dependent NAD(+) synthetase from Mycobacterium leprae (strain TN).